Here is a 259-residue protein sequence, read N- to C-terminus: Thiazole synthase (259 aa).

The active-site Schiff-base intermediate with DXP is the K98. Residues G159, 185 to 186, and 207 to 208 contribute to the 1-deoxy-D-xylulose 5-phosphate site; these read AG and NS.

Belongs to the ThiG family. Homotetramer. Forms heterodimers with either ThiH or ThiS.

The protein localises to the cytoplasm. It carries out the reaction [ThiS sulfur-carrier protein]-C-terminal-Gly-aminoethanethioate + 2-iminoacetate + 1-deoxy-D-xylulose 5-phosphate = [ThiS sulfur-carrier protein]-C-terminal Gly-Gly + 2-[(2R,5Z)-2-carboxy-4-methylthiazol-5(2H)-ylidene]ethyl phosphate + 2 H2O + H(+). It participates in cofactor biosynthesis; thiamine diphosphate biosynthesis. In terms of biological role, catalyzes the rearrangement of 1-deoxy-D-xylulose 5-phosphate (DXP) to produce the thiazole phosphate moiety of thiamine. Sulfur is provided by the thiocarboxylate moiety of the carrier protein ThiS. In vitro, sulfur can be provided by H(2)S. The chain is Thiazole synthase from Chlorobium phaeovibrioides (strain DSM 265 / 1930) (Prosthecochloris vibrioformis (strain DSM 265)).